We begin with the raw amino-acid sequence, 90 residues long: Acylphosphatase (90 aa).

The Acylphosphatase-like domain occupies 3 to 89 (ALKIRVEGIV…EGYEDFTIKY (87 aa)). Residues arginine 18 and asparagine 36 contribute to the active site.

This sequence belongs to the acylphosphatase family.

The catalysed reaction is an acyl phosphate + H2O = a carboxylate + phosphate + H(+). The sequence is that of Acylphosphatase (acyP) from Thermotoga maritima (strain ATCC 43589 / DSM 3109 / JCM 10099 / NBRC 100826 / MSB8).